A 181-amino-acid polypeptide reads, in one-letter code: Protein Ves (181 aa).

This sequence belongs to the Ves family.

The chain is Protein Ves from Cronobacter sakazakii (strain ATCC BAA-894) (Enterobacter sakazakii).